A 485-amino-acid polypeptide reads, in one-letter code: Silicon efflux transporter LSI3 (485 aa).

5 consecutive transmembrane segments (helical) span residues 14 to 34 (VAFG…LPIG), 37 to 57 (AGAL…ADDA), 59 to 79 (ASID…GGYL), 106 to 126 (VCVV…CVVL), and 180 to 200 (FLLG…LMLL). The segment covering 233-242 (ALNNNKKDDG) has biased composition (basic and acidic residues). Residues 233 to 261 (ALNNNKKDDGDAATPASPEDDDGGDAESM) form a disordered region. 5 consecutive transmembrane segments (helical) span residues 283–303 (LFLK…YMLG), 336–356 (LLVF…TGLP), 377–397 (VLSV…TVLL), 418–438 (WLLL…GSAA), and 461–481 (HVIF…PLIG).

Belongs to the arsenite-antimonite (ArsB) efflux (TC 2.A.45) family.

The protein localises to the cell membrane. Silicon efflux transporter involved in silicon transport in shoots. In the nodes, involved with LSI2 and NIP2-2/LSI6 in silicon intervascular transfer, which is required for the preferential distribution of silicon, such as hyperaccumulation of silicon in the husk. Silicon is beneficial to plant growth and helps plants to overcome abiotic and biotic stresses by preventing lodging (falling over) and increasing resistance to pests and diseases, as well as other stresses. The chain is Silicon efflux transporter LSI3 from Oryza sativa subsp. japonica (Rice).